A 503-amino-acid polypeptide reads, in one-letter code: MAKYYNEPCHTFNEYLLIPGLSTVDCIPSNVNLSTPLVKFQKGQQSEINLKIPLVSAIMQSVSGEKMAIALAREGGISFIFGSQSIESQAAMVHAVKNFKAGFVVSDSNVKPDQTFADVLAISQRTTHNTVAVTDDGTPHGVLLGLVTQRDYPIDLTQTETKVSDMMTPFSKLVTAHQDTKLSEANKIIWEKKLNALPIIDDDQHLRYIVFRKDYDRSQVCHNELVDSQKRYLVGAGINTRDFRERVPALVEAGADVLCIDSSDGFSEWQKITIGWIREKYGDKVKVGAGNIVDGEGFRYLADAGADFIKIGIGGGSICITREQKGIGRGQATAVIDVVAERNKYFEETGIYIPVCSDGGIVYDYHMTLALAMGADFIMLGRYFARFEESPTRKVTINGSVMKEYWGEGSSRARNWQRYDLGGKQKLSFEEGVDSYVPYAGKLKDNVEASLNKVKSTMCNCGALTIPQLQSKAKITLVSSVSIVEGGAHDVIVKDRINDYHPK.

Gly20 and Ser22 together coordinate K(+). 2 consecutive CBS domains span residues 103 to 163 (FVVS…ETKV) and 167 to 228 (MTPF…LVDS). 261-263 (DSS) contributes to the NAD(+) binding site. Residues Asp264, Phe266, Gly314, and Gly316 each coordinate K(+). 312–314 (GIG) serves as a coordination point for NAD(+). Ser317 contacts IMP. Position 319 (Cys319) interacts with K(+). Cys319 acts as the Thioimidate intermediate in catalysis. IMP is bound by residues 358 to 360 (DGG), 381 to 382 (GR), and 405 to 409 (YWGEG). Catalysis depends on Arg418, which acts as the Proton acceptor. Glu431 is a binding site for IMP. Residues Asn460, Glu485, Gly486, and Gly487 each contribute to the K(+) site.

It belongs to the IMPDH/GMPR family. Homotetramer. K(+) serves as cofactor.

It is found in the cytoplasm. The enzyme catalyses IMP + NAD(+) + H2O = XMP + NADH + H(+). Its pathway is purine metabolism; XMP biosynthesis via de novo pathway; XMP from IMP: step 1/1. Its activity is regulated as follows. Mycophenolic acid (MPA) is a non-competitive inhibitor that prevents formation of the closed enzyme conformation by binding to the same site as the amobile flap. In contrast, mizoribine monophosphate (MZP) is a competitive inhibitor that induces the closed conformation. MPA is a potent inhibitor of mammalian IMPDHs but a poor inhibitor of the bacterial enzymes. MZP is a more potent inhibitor of bacterial IMPDH. Catalyzes the conversion of inosine 5'-phosphate (IMP) to xanthosine 5'-phosphate (XMP), the first committed and rate-limiting step in the de novo synthesis of guanine nucleotides, and therefore plays an important role in the regulation of cell growth. Could also have a single-stranded nucleic acid-binding activity and could play a role in RNA and/or DNA metabolism. The protein is Inosine-5'-monophosphate dehydrogenase of Tritrichomonas foetus (Trichomonas foetus).